We begin with the raw amino-acid sequence, 605 residues long: Probable potassium transport system protein Kup 1 (605 aa).

12 consecutive transmembrane segments (helical) span residues 16–36 (ALGL…TVIF), 46–66 (VFGI…MEYA), 97–117 (VAFA…DGVI), 138–158 (GLST…LFSV), 166–186 (VAGA…VTGV), 212–232 (GLAG…GEAL), 248–268 (WYFV…FAIT), 287–307 (LYIP…QSII), 339–359 (IYLG…MLLF), 368–388 (AYGM…IIVF), 397–417 (ALVA…TFSK), and 418–438 (IPHG…TIII).

It belongs to the HAK/KUP transporter (TC 2.A.72) family.

The protein resides in the cell inner membrane. The catalysed reaction is K(+)(in) + H(+)(in) = K(+)(out) + H(+)(out). Functionally, transport of potassium into the cell. Likely operates as a K(+):H(+) symporter. The chain is Probable potassium transport system protein Kup 1 from Geobacter metallireducens (strain ATCC 53774 / DSM 7210 / GS-15).